The primary structure comprises 210 residues: Neuroendocrine protein 7B2 (210 aa).

The signal sequence occupies residues 1-24; the sequence is MTSRMAILSGLLFWLLLEWNPAFA. C118 and C128 are joined by a disulfide. 2 positions are modified to phosphoserine: S139 and S203.

This sequence belongs to the 7B2 family. In terms of assembly, interacts with PCSK2/PC2 early in the secretory pathway. Dissociation occurs at later stages. In terms of processing, proteolytically cleaved in the Golgi by a furin-like convertase to generate bioactive peptides. Post-translationally, sulfated on tyrosine residues.

The protein localises to the secreted. Its function is as follows. Acts as a molecular chaperone for PCSK2/PC2, preventing its premature activation in the regulated secretory pathway. Binds to inactive PCSK2 in the endoplasmic reticulum and facilitates its transport from there to later compartments of the secretory pathway where it is proteolytically matured and activated. Also required for cleavage of PCSK2 but does not appear to be involved in its folding. Plays a role in regulating pituitary hormone secretion. The C-terminal peptide inhibits PCSK2 in vitro. The chain is Neuroendocrine protein 7B2 (Scg5) from Rattus norvegicus (Rat).